Here is a 2517-residue protein sequence, read N- to C-terminus: Serine/threonine-protein kinase ATR (2517 aa).

Residues 1178–1214 form an HEAT repeat; that stretch reads EPMLEQIVNVLMAGCQHDDSQLQMASAKCLGELGAID. Residues 1509-2066 enclose the FAT domain; that stretch reads LVSRASYNCG…LWMLLPHFKS (558 aa). Ser-1569 carries the phosphoserine modification. Tyr-1570 carries the phosphotyrosine modification. Ser-1573 is subject to Phosphoserine. Thr-1575 is modified (phosphothreonine). The PI3K/PI4K catalytic domain occupies 2184–2508; sequence FQESVLILRS…EATKVDNLAS (325 aa). A G-loop region spans residues 2190-2196; it reads ILRSAAK. Positions 2360 to 2368 are catalytic loop; it reads GLGDRHGEN. The tract at residues 2380-2404 is activation loop; the sequence is HVDFNCLFNQGELLPYPEVVPFRLT. Positions 2485 to 2517 constitute an FATC domain; that stretch reads IPLSTEGQVNFLINEATKVDNLASMYIGWGAFL.

It belongs to the PI3/PI4-kinase family. ATM subfamily. As to quaternary structure, interacts with mus304. Mn(2+) is required as a cofactor.

It is found in the nucleus. It carries out the reaction L-seryl-[protein] + ATP = O-phospho-L-seryl-[protein] + ADP + H(+). It catalyses the reaction L-threonyl-[protein] + ATP = O-phospho-L-threonyl-[protein] + ADP + H(+). Its function is as follows. Serine/threonine protein kinase which activates checkpoint signaling upon genotoxic stresses such as ionizing radiation (IR), ultraviolet light (UV), or DNA replication stalling, thereby acting as a DNA damage sensor. Recognizes the substrate consensus sequence [ST]-Q. Phosphorylates various proteins, which collectively inhibits DNA replication and mitosis and promotes DNA repair and recombination. Phosphorylates grp/CHK1. Phosphorylates 'Ser-137' of histone variant H2AX/H2AV at sites of DNA damage, thereby regulating DNA damage response mechanism. Essential for the DNA damage checkpoint in larval imaginal disks and neuroblasts and for the DNA replication checkpoint in the embryo. Also has an essential role during early nuclear divisions in embryos, where it is required to delay mitosis in response to incomplete DNA replication. Also plays an important role during meiosis, where it may monitor double-strand-break repair during meiotic crossing over, to regulate the progression of prophase I, and to enforce metaphase I delay observed at the end of oogenesis. Involved in telomere maintenance and prevention of telomere fusion; potentially functioning downstream of moi/modigliani. This Drosophila melanogaster (Fruit fly) protein is Serine/threonine-protein kinase ATR (mei-41).